Consider the following 478-residue polypeptide: Glutamate-1-semialdehyde 2,1-aminomutase, chloroplastic (478 aa).

The transit peptide at 1–40 directs the protein to the chloroplast; the sequence is MAGAAAASAAAAAVASGISARPVAPRPSPSRARAPRSVVR. The tract at residues 15-36 is disordered; that stretch reads ASGISARPVAPRPSPSRARAPR. K318 bears the N6-(pyridoxal phosphate)lysine mark.

This sequence belongs to the class-III pyridoxal-phosphate-dependent aminotransferase family. HemL subfamily. As to quaternary structure, homodimer. Pyridoxal 5'-phosphate is required as a cofactor.

It is found in the plastid. It localises to the chloroplast. It catalyses the reaction (S)-4-amino-5-oxopentanoate = 5-aminolevulinate. It functions in the pathway porphyrin-containing compound metabolism; protoporphyrin-IX biosynthesis; 5-aminolevulinate from L-glutamyl-tRNA(Glu): step 2/2. Its pathway is porphyrin-containing compound metabolism; chlorophyll biosynthesis. The sequence is that of Glutamate-1-semialdehyde 2,1-aminomutase, chloroplastic (GSA) from Oryza sativa subsp. japonica (Rice).